The following is a 154-amino-acid chain: Myoglobin (154 aa).

Residues 2 to 148 form the Globin domain; the sequence is GLSDGEWQLV…FRNDMAAKYK (147 aa). Ser4 is modified (phosphoserine). His65 lines the nitrite pocket. His65 contributes to the O2 binding site. The residue at position 68 (Thr68) is a Phosphothreonine. His94 is a binding site for heme b.

This sequence belongs to the globin family. In terms of assembly, monomeric.

The protein localises to the cytoplasm. It localises to the sarcoplasm. It catalyses the reaction Fe(III)-heme b-[protein] + nitric oxide + H2O = Fe(II)-heme b-[protein] + nitrite + 2 H(+). The catalysed reaction is H2O2 + AH2 = A + 2 H2O. Monomeric heme protein which primary function is to store oxygen and facilitate its diffusion within muscle tissues. Reversibly binds oxygen through a pentacoordinated heme iron and enables its timely and efficient release as needed during periods of heightened demand. Depending on the oxidative conditions of tissues and cells, and in addition to its ability to bind oxygen, it also has a nitrite reductase activity whereby it regulates the production of bioactive nitric oxide. Under stress conditions, like hypoxia and anoxia, it also protects cells against reactive oxygen species thanks to its pseudoperoxidase activity. The protein is Myoglobin (MB) of Callithrix jacchus (White-tufted-ear marmoset).